Reading from the N-terminus, the 296-residue chain is Pantothenate synthetase (296 aa).

37–44 (MGALHTGH) provides a ligand contact to ATP. Residue His44 is the Proton donor of the active site. Position 68 (Gln68) interacts with (R)-pantoate. Gln68 is a beta-alanine binding site. Position 160–163 (160–163 (GQKD)) interacts with ATP. A (R)-pantoate-binding site is contributed by Gln166. ATP is bound by residues Val189 and 197–200 (TSSR).

This sequence belongs to the pantothenate synthetase family. As to quaternary structure, homodimer.

The protein resides in the cytoplasm. It carries out the reaction (R)-pantoate + beta-alanine + ATP = (R)-pantothenate + AMP + diphosphate + H(+). It functions in the pathway cofactor biosynthesis; (R)-pantothenate biosynthesis; (R)-pantothenate from (R)-pantoate and beta-alanine: step 1/1. In terms of biological role, catalyzes the condensation of pantoate with beta-alanine in an ATP-dependent reaction via a pantoyl-adenylate intermediate. In Thermobifida fusca (strain YX), this protein is Pantothenate synthetase.